The primary structure comprises 381 residues: MRSKKLWISLLFALTLIFTMAFSNMSVQAAGKSSTEKKYIVGFKQTMSAMSSAKKKDVISEKGGKVQKQFKYVNAAAATLDEKAVKELKKDPSVAYVEEDHIAHEYAQSVPYGISQIKAPALHSQGYTGSNVKVAVIDSGIDSSHPDLNVRGGASFVPSETNPYQDGSSHGTHVAGTIAALNNSIGVLGVSPSASLYAVKVLDSTGSGQYSWIINGIEWAISNNMDVINMSLGGPSGSTALKTVVDKAVSSGIVVAAAAGNEGSSGSSSTVGYPAKYPSTIAVGAVNSSNQRASFSSAGSELDVMAPGVSIQSTLPGGTYGAYNGTSMATPHVAGAAALILSKHPTWTNAQVRDRLESTATYLGNSFYYGKGLINVQAAAQ.

The N-terminal stretch at 1–29 is a signal peptide; it reads MRSKKLWISLLFALTLIFTMAFSNMSVQA. Residues 30–106 constitute a propeptide that is removed on maturation; the sequence is AGKSSTEKKY…VEEDHIAHEY (77 aa). Residues 38–103 enclose the Inhibitor I9 domain; it reads KYIVGFKQTM…VAYVEEDHIA (66 aa). Position 108 (Gln108) interacts with Ca(2+). A Peptidase S8 domain is found at 111–380; it reads PYGISQIKAP…KGLINVQAAA (270 aa). Residue Asp138 is the Charge relay system of the active site. Asp147 serves as a coordination point for Ca(2+). The active-site Charge relay system is His170. Ca(2+) is bound by residues Leu181, Asn183, Ile185, Val187, Ala275, Tyr277, and Thr280. Ser327 serves as the catalytic Charge relay system.

It belongs to the peptidase S8 family. Ca(2+) is required as a cofactor.

The protein localises to the secreted. The enzyme catalyses Hydrolysis of proteins with broad specificity for peptide bonds, and a preference for a large uncharged residue in P1. Hydrolyzes peptide amides.. Functionally, subtilisin is an extracellular alkaline serine protease, it catalyzes the hydrolysis of proteins and peptide amides. The sequence is that of Subtilisin J (aprJ) from Geobacillus stearothermophilus (Bacillus stearothermophilus).